A 339-amino-acid chain; its full sequence is Ubiquitin carboxyl-terminal hydrolase 50 (339 aa).

The region spanning 44 to 339 (TGLWNLGNTC…AFCKNSVTQA (296 aa)) is the USP domain. The Nucleophile role is filled by Cys53. Residue His327 is the Proton acceptor of the active site.

The protein belongs to the peptidase C19 family. Weakly expressed in a few tissues.

The protein localises to the cytoplasm. It is found in the cytoskeleton. Its subcellular location is the microtubule organizing center. The protein resides in the centrosome. It localises to the nucleus. The catalysed reaction is Thiol-dependent hydrolysis of ester, thioester, amide, peptide and isopeptide bonds formed by the C-terminal Gly of ubiquitin (a 76-residue protein attached to proteins as an intracellular targeting signal).. In terms of biological role, deubiquitinating enzyme that removes conjugated ubiquitin from specific proteins to regulate different cellular processes. Regulates the inflammasome signaling pathway by deubiquitinating 'Lys-63'-linked polyubiquitination of the PYCARD/ASC adapter protein. Regulates the ubiquitination and stability of the ACE2 protein. Acts as a negative regulator of the G2/M checkpoint pathway, by preventing serine/threonine kinase WEE1 degradation, thereby repressing entry into mitosis following activation of the G2/M DNA damage checkpoint. The polypeptide is Ubiquitin carboxyl-terminal hydrolase 50 (Homo sapiens (Human)).